A 443-amino-acid polypeptide reads, in one-letter code: MPFIPHSPEEVREMLSVIGVQSIEDLFVDIPAEMRPRSFELPLGLSEMQVLAKMEEMAARNRTDVVSFLGGGFYSHHIPAAVDALVSRGEFYTAYTPYQPEASQGTLQAIFEYQTAVCRLLDMDCANASVYDGGSAIFEAMMMAVRATKRRKLVIDEAVSPIWRTMLASYTSNLSLDLVTVPQVDGRSDMAAMKAAVDTGCAAVVVQNPNFFGVVEDFTDLFAHAKSQKAASVISVYPVMQSVLKTPGEMGADIAVAEGQSLGQPLSFGGPYLGIMTCTKDMVRQMPGRIVGRTNDTEGRTGYVLTLQAREQHIRRAKATSNICSNQALCALRTLVHLCLLGPEGLIRTAELSMERARYAMERLTAIAGVRPLNTAPFGNEFAVRLPIPAFEAVDRLTARGYVPGFPVGRYYAGMDDVLLVACTEKNSFEQVGILAEMLGGIL.

Belongs to the GcvP family. N-terminal subunit subfamily. As to quaternary structure, the glycine cleavage system is composed of four proteins: P, T, L and H. In this organism, the P 'protein' is a heterodimer of two subunits.

The enzyme catalyses N(6)-[(R)-lipoyl]-L-lysyl-[glycine-cleavage complex H protein] + glycine + H(+) = N(6)-[(R)-S(8)-aminomethyldihydrolipoyl]-L-lysyl-[glycine-cleavage complex H protein] + CO2. Functionally, the glycine cleavage system catalyzes the degradation of glycine. The P protein binds the alpha-amino group of glycine through its pyridoxal phosphate cofactor; CO(2) is released and the remaining methylamine moiety is then transferred to the lipoamide cofactor of the H protein. The polypeptide is Probable glycine dehydrogenase (decarboxylating) subunit 1 (Nitratidesulfovibrio vulgaris (strain DSM 19637 / Miyazaki F) (Desulfovibrio vulgaris)).